The chain runs to 423 residues: GTPase Obg (423 aa).

The 158-residue stretch at 1–158 (MFIDTARIYI…MWVRLELKLL (158 aa)) folds into the Obg domain. The OBG-type G domain maps to 159-329 (ADVGLIGFPN…LLDKTIEILS (171 aa)). GTP is bound by residues 165–172 (GFPNAGKS), 190–194 (FTTLT), 211–214 (DIPG), 281–284 (NKID), and 310–312 (SAL). Residues S172 and T192 each contribute to the Mg(2+) site. The region spanning 346-423 (TPPEEEETLN…VRDFEFEYYE (78 aa)) is the OCT domain.

This sequence belongs to the TRAFAC class OBG-HflX-like GTPase superfamily. OBG GTPase family. As to quaternary structure, monomer. Requires Mg(2+) as cofactor.

It is found in the cytoplasm. In terms of biological role, an essential GTPase which binds GTP, GDP and possibly (p)ppGpp with moderate affinity, with high nucleotide exchange rates and a fairly low GTP hydrolysis rate. Plays a role in control of the cell cycle, stress response, ribosome biogenesis and in those bacteria that undergo differentiation, in morphogenesis control. This chain is GTPase Obg, found in Thermoanaerobacter pseudethanolicus (strain ATCC 33223 / 39E) (Clostridium thermohydrosulfuricum).